Here is a 308-residue protein sequence, read N- to C-terminus: D-2-hydroxyacid dehydrogenase (308 aa).

NAD(+) contacts are provided by residues 145–146 (TL), 224–226 (VAR), and Asp250. Residue Arg226 is part of the active site. Glu255 is an active-site residue. Catalysis depends on His274, which acts as the Proton donor. Position 274-277 (274-277 (HVSA)) interacts with NAD(+).

The protein belongs to the D-isomer specific 2-hydroxyacid dehydrogenase family. In terms of assembly, homotetramer.

Its function is as follows. Catalyzes the stereospecific NAD(P)H-dependent reduction of 2-ketocarboxylic acids into the corresponding D-2-hydroxycarboxylic acids. Can use both NADPH or NADH as reductant, displaying a marked preference for NADPH over NADH. Shows a broad substrate specificity, although it displays a marked preference for the 2-ketocarboxylic acids having an unbranched chain of 4-5 carbon atoms. The sequence is that of D-2-hydroxyacid dehydrogenase (ddh) from Haloferax mediterranei (strain ATCC 33500 / DSM 1411 / JCM 8866 / NBRC 14739 / NCIMB 2177 / R-4) (Halobacterium mediterranei).